Reading from the N-terminus, the 645-residue chain is Ethylene response sensor 2 (645 aa).

A run of 4 helical transmembrane segments spans residues Leu5–Ala25, Val54–Val74, Val86–Phe106, and Leu125–Leu145. Positions 97 and 101 each coordinate Cu cation. A GAF domain is found at Asp190–Ile346. The region spanning Met389–Met623 is the Histidine kinase domain.

The protein belongs to the ethylene receptor family. Heteromer with ETR1. Requires Cu cation as cofactor. Autophosphorylated predominantly on Ser residues. In terms of tissue distribution, expressed in etiolated seedlings, leaves, roots and stems. Highly expressed in flowers, stamens, pollen cells, tapetum cells, carpels and ovules.

It localises to the endoplasmic reticulum membrane. Its function is as follows. Ethylene receptor related to bacterial two-component regulators. Acts as a redundant negative regulator of ethylene signaling. This is Ethylene response sensor 2 (ERS2) from Arabidopsis thaliana (Mouse-ear cress).